The following is a 281-amino-acid chain: ATP synthase gamma chain (281 aa).

It belongs to the ATPase gamma chain family. As to quaternary structure, F-type ATPases have 2 components, CF(1) - the catalytic core - and CF(0) - the membrane proton channel. CF(1) has five subunits: alpha(3), beta(3), gamma(1), delta(1), epsilon(1). CF(0) has three main subunits: a, b and c.

The protein localises to the cell inner membrane. Functionally, produces ATP from ADP in the presence of a proton gradient across the membrane. The gamma chain is believed to be important in regulating ATPase activity and the flow of protons through the CF(0) complex. The protein is ATP synthase gamma chain of Ehrlichia chaffeensis (strain ATCC CRL-10679 / Arkansas).